Consider the following 570-residue polypeptide: Endo-1,4-beta-xylanase 4 (570 aa).

Residues 1–24 (MKRFNYGFFHLVLFLISLLLLGSG) form the signal peptide. N92, N190, and N300 each carry an N-linked (GlcNAc...) asparagine glycan. The 300-residue stretch at 195–494 (EGSVISIEQI…TQAGDLIDKL (300 aa)) folds into the GH10 domain. Catalysis depends on E325, which acts as the Proton donor. An N-linked (GlcNAc...) asparagine glycan is attached at N339. The active-site Nucleophile is the E432. N-linked (GlcNAc...) asparagine glycosylation occurs at N545.

Belongs to the glycosyl hydrolase 10 (cellulase F) family.

It carries out the reaction Endohydrolysis of (1-&gt;4)-beta-D-xylosidic linkages in xylans.. Its pathway is glycan degradation; xylan degradation. Its function is as follows. Binds to and hydrolyzes insoluble and soluble xylan substrates. The chain is Endo-1,4-beta-xylanase 4 from Arabidopsis thaliana (Mouse-ear cress).